A 218-amino-acid polypeptide reads, in one-letter code: Suppressor of silencing P0 (218 aa).

Residues 63 to 67 (LPLHL) form the F-box-like domain.

Belongs to the polerovirus P0 protein family. As to quaternary structure, interacts (via F-box-like domain) with host AGO1; this interaction targets AGO1 for degradation, and thereby suppresses the silencing function of the latter. Interacts (via F-box-like domain) with host ASK1 and ASK2 (SKP proteins); these interactions are essential for viral pathogenicity. Part of a SCF P0 complex composed of P0 and the host proteins SKP and CUL1.

Functionally, suppressor of RNA-mediated gene silencing, also known as post-transcriptional gene silencing (PTGS), a mechanism of plant viral defense that limits the accumulation of viral RNAs. The P0 protein suppresses local PTGS using its F-box-like domain to mediate destabilization and degradation of the AGO1 protein. This chain is Suppressor of silencing P0, found in Beet western yellows virus (isolate GB1) (BWYV).